The primary structure comprises 357 residues: Hyaluronidase (357 aa).

The signal sequence occupies residues 1-26; it reads MLLVTLFLFFLQALVNGDSCGSNCEK. 2 disulfides stabilise this stretch: Cys45–Cys334 and Cys211–Cys223. N-linked (GlcNAc...) asparagine glycosylation is found at Asn105 and Asn125. Glu135 functions as the Proton donor in the catalytic mechanism. The N-linked (GlcNAc...) asparagine glycan is linked to Asn153. Residue Asn351 is glycosylated (N-linked (GlcNAc...) asparagine).

Belongs to the glycosyl hydrolase 56 family.

It is found in the secreted. The enzyme catalyses Random hydrolysis of (1-&gt;4)-linkages between N-acetyl-beta-D-glucosamine and D-glucuronate residues in hyaluronate.. Its function is as follows. Hydrolyzes high molecular weight hyaluronic acid to produce small oligosaccharides. In Vespa magnifica (Hornet), this protein is Hyaluronidase.